Here is a 646-residue protein sequence, read N- to C-terminus: Translation initiation factor IF-2 (646 aa).

In terms of domain architecture, tr-type G spans 146 to 315 (PRPPVVTVMG…LLVAEMEELR (170 aa)). The tract at residues 155-162 (GHVDHGKT) is G1. Residue 155-162 (GHVDHGKT) coordinates GTP. The tract at residues 180–184 (GITQH) is G2. Residues 201–204 (DTPG) are G3. GTP is bound by residues 201 to 205 (DTPGH) and 255 to 258 (NKID). The G4 stretch occupies residues 255–258 (NKID). Residues 291-293 (SAK) form a G5 region.

This sequence belongs to the TRAFAC class translation factor GTPase superfamily. Classic translation factor GTPase family. IF-2 subfamily.

The protein resides in the cytoplasm. One of the essential components for the initiation of protein synthesis. Protects formylmethionyl-tRNA from spontaneous hydrolysis and promotes its binding to the 30S ribosomal subunits. Also involved in the hydrolysis of GTP during the formation of the 70S ribosomal complex. The polypeptide is Translation initiation factor IF-2 (Clostridioides difficile (strain 630) (Peptoclostridium difficile)).